A 246-amino-acid chain; its full sequence is Auxin-responsive protein IAA11 (246 aa).

The EAR-like (transcriptional repression) motif lies at 36-40 (LGLTL). The PB1 domain occupies 136–235 (SMFVKVTMDG…SVRRLRIMKT (100 aa)).

It belongs to the Aux/IAA family. In terms of assembly, homodimers and heterodimers. Interacts with TPL. As to expression, preferentially expressed in stems and flowers.

Its subcellular location is the nucleus. In terms of biological role, aux/IAA proteins are short-lived transcriptional factors that function as repressors of early auxin response genes at low auxin concentrations. Repression is thought to result from the interaction with auxin response factors (ARFs), proteins that bind to the auxin-responsive promoter element (AuxRE). Formation of heterodimers with ARF proteins may alter their ability to modulate early auxin response genes expression. This chain is Auxin-responsive protein IAA11 (IAA11), found in Arabidopsis thaliana (Mouse-ear cress).